A 317-amino-acid chain; its full sequence is uncharacterized protein (317 aa).

The span at 1–11 (MASAGAERRPG) shows a compositional bias: basic and acidic residues. The segment at 1–164 (MASAGAERRP…KAKKRKSLGA (164 aa)) is disordered. The segment covering 19–34 (GQGQLTEEPGSAQTSE) has biased composition (polar residues). Composition is skewed to basic and acidic residues over residues 47–58 (HEARGTQSEDQR) and 71–92 (EGPKLGEERPKPHAGALEERGP). Basic residues-rich tracts occupy residues 100 to 110 (RPRHGPKRKPV) and 151 to 161 (KQHKKAKKRKS).

This is an uncharacterized protein from Homo sapiens (Human).